Consider the following 655-residue polypeptide: tRNA-guanine(15) transglycosylase (655 aa).

Asp89 functions as the Nucleophile in the catalytic mechanism. Residues Asp124 and Ala195 each contribute to the substrate site. The Zn(2+) site is built by Cys281, Cys283, and Cys286. Residues 577–652 enclose the PUA domain; that stretch reads KYRVVVNKEA…LAVKVRGGLK (76 aa).

Belongs to the archaeosine tRNA-ribosyltransferase family. The cofactor is Zn(2+).

It carries out the reaction guanosine(15) in tRNA + 7-cyano-7-deazaguanine = 7-cyano-7-carbaguanosine(15) in tRNA + guanine. It participates in tRNA modification; archaeosine-tRNA biosynthesis. Functionally, exchanges the guanine residue with 7-cyano-7-deazaguanine (preQ0) at position 15 in the dihydrouridine loop (D-loop) of archaeal tRNAs. Can also utilize guanine as substrate. This Methanocaldococcus jannaschii (strain ATCC 43067 / DSM 2661 / JAL-1 / JCM 10045 / NBRC 100440) (Methanococcus jannaschii) protein is tRNA-guanine(15) transglycosylase.